Here is a 427-residue protein sequence, read N- to C-terminus: Serine hydroxymethyltransferase (427 aa).

120–122 (GHI) lines the (6S)-5,6,7,8-tetrahydrofolate pocket. Lysine 226 bears the N6-(pyridoxal phosphate)lysine mark.

The protein belongs to the SHMT family. As to quaternary structure, homodimer. Pyridoxal 5'-phosphate is required as a cofactor.

Its subcellular location is the cytoplasm. It functions in the pathway amino-acid biosynthesis; glycine biosynthesis; glycine from L-serine: step 1/1. Its function is as follows. Catalyzes the reversible interconversion of serine and glycine with a modified folate serving as the one-carbon carrier. Also exhibits a pteridine-independent aldolase activity toward beta-hydroxyamino acids, producing glycine and aldehydes, via a retro-aldol mechanism. The protein is Serine hydroxymethyltransferase of Pyrococcus horikoshii (strain ATCC 700860 / DSM 12428 / JCM 9974 / NBRC 100139 / OT-3).